Consider the following 335-residue polypeptide: Glycerol-3-phosphate dehydrogenase [NAD(P)+] (335 aa).

NADPH is bound by residues S10, F11, R31, and K105. Sn-glycerol 3-phosphate contacts are provided by K105, G136, and S138. NADPH is bound at residue A140. 5 residues coordinate sn-glycerol 3-phosphate: K191, D244, S254, R255, and N256. K191 serves as the catalytic Proton acceptor. Residue R255 coordinates NADPH. NADPH contacts are provided by V279 and E281.

This sequence belongs to the NAD-dependent glycerol-3-phosphate dehydrogenase family.

It localises to the cytoplasm. It catalyses the reaction sn-glycerol 3-phosphate + NAD(+) = dihydroxyacetone phosphate + NADH + H(+). The enzyme catalyses sn-glycerol 3-phosphate + NADP(+) = dihydroxyacetone phosphate + NADPH + H(+). Its pathway is membrane lipid metabolism; glycerophospholipid metabolism. Functionally, catalyzes the reduction of the glycolytic intermediate dihydroxyacetone phosphate (DHAP) to sn-glycerol 3-phosphate (G3P), the key precursor for phospholipid synthesis. This Leptospira interrogans serogroup Icterohaemorrhagiae serovar Lai (strain 56601) protein is Glycerol-3-phosphate dehydrogenase [NAD(P)+].